The chain runs to 469 residues: Regulator of G-protein signaling 7 (469 aa).

The region spanning 37 to 112 (EKNGIPIRTV…DDGTFYRFQT (76 aa)) is the DEP domain. Ser-229 and Ser-241 each carry phosphoserine. The segment at 235-256 (NDIRSHSPTHTPTPETKPPTED) is disordered. Phosphothreonine is present on Thr-243. Residues 255–316 (EDELQQQIKY…LSDDTTFWEL (62 aa)) form the G protein gamma domain. In terms of domain architecture, RGS spans 333–448 (GMDEALKDPV…IRSSAYQELL (116 aa)). Ser-434 carries the post-translational modification Phosphoserine.

As to quaternary structure, interacts with GNB5, forming the RGS7-GNB5 complex. Interacts with GPR158; promotes the GTPase activator activity of the RGS7-GNB5 complex in absence of glycine, in contrast GTPase activator activity of the RGS7-GNB5 complex is inhibited in presence of glycine. Interacts with GPR179. Interacts with PKD1; this prevents rapid proteasomal degradation. Interacts with RGS7BP, leading to regulate the subcellular location of the heterodimer formed with GNB5. Interacts (phosphorylated form) with 14-3-3 protein YWHAQ. Interacts with SNAPIN. Interacts with GNAI1. Interacts with GNAO1, GNAI3 and GNAZ. Palmitoylated. Post-translationally, ubiquitinated, leading to rapid proteasomal degradation. In terms of processing, phosphorylation and subsequent interaction with 14-3-3 proteins inhibits GAP activity. Detected in retina (at protein level).

The protein resides in the cytoplasm. The protein localises to the cytosol. Its subcellular location is the cell membrane. It localises to the membrane. Functionally, GTPase activator component of the RGS7-GNB5 complex that regulates G protein-coupled receptor signaling cascades. The RGS7-GNB5 complex acts as an inhibitor signal transduction by promoting the GTPase activity of G protein alpha subunits, such as GNAO1, thereby driving them into their inactive GDP-bound form. May play a role in synaptic vesicle exocytosis. Glycine-dependent regulation of the RGS7-GNB5 complex by GPR158 affects mood and cognition via its ability to regulate neuronal excitability in L2/L3 pyramidal neurons of the prefrontal cortex. Modulates the activity of potassium channels that are activated by GNAO1 in response to muscarinic acetylcholine receptor M2/CHRM2 signaling. The protein is Regulator of G-protein signaling 7 (RGS7) of Bos taurus (Bovine).